A 333-amino-acid chain; its full sequence is Ribosomal RNA small subunit methyltransferase H (333 aa).

S-adenosyl-L-methionine contacts are provided by residues 39-41, D57, F84, D101, and Q108; that span reads GGY.

Belongs to the methyltransferase superfamily. RsmH family.

The protein localises to the cytoplasm. The catalysed reaction is cytidine(1402) in 16S rRNA + S-adenosyl-L-methionine = N(4)-methylcytidine(1402) in 16S rRNA + S-adenosyl-L-homocysteine + H(+). Functionally, specifically methylates the N4 position of cytidine in position 1402 (C1402) of 16S rRNA. In Dinoroseobacter shibae (strain DSM 16493 / NCIMB 14021 / DFL 12), this protein is Ribosomal RNA small subunit methyltransferase H.